Here is a 325-residue protein sequence, read N- to C-terminus: tRNA N6-adenosine threonylcarbamoyltransferase (325 aa).

Fe cation is bound by residues His-110 and His-114. Substrate contacts are provided by residues 133–137, Asp-165, Gly-178, and Asn-268; that span reads MVSGG. Residue Asp-296 coordinates Fe cation.

The protein belongs to the KAE1 / TsaD family. It depends on Fe(2+) as a cofactor.

Its subcellular location is the cytoplasm. It carries out the reaction L-threonylcarbamoyladenylate + adenosine(37) in tRNA = N(6)-L-threonylcarbamoyladenosine(37) in tRNA + AMP + H(+). In terms of biological role, required for the formation of a threonylcarbamoyl group on adenosine at position 37 (t(6)A37) in tRNAs that read codons beginning with adenine. Is involved in the transfer of the threonylcarbamoyl moiety of threonylcarbamoyl-AMP (TC-AMP) to the N6 group of A37, together with TsaE and TsaB. TsaD likely plays a direct catalytic role in this reaction. The chain is tRNA N6-adenosine threonylcarbamoyltransferase from Thermosipho melanesiensis (strain DSM 12029 / CIP 104789 / BI429).